A 292-amino-acid chain; its full sequence is Ribosomal RNA small subunit methyltransferase A (292 aa).

Positions 28, 30, 55, 77, 103, and 123 each coordinate S-adenosyl-L-methionine.

It belongs to the class I-like SAM-binding methyltransferase superfamily. rRNA adenine N(6)-methyltransferase family. RsmA subfamily.

The protein localises to the cytoplasm. It carries out the reaction adenosine(1518)/adenosine(1519) in 16S rRNA + 4 S-adenosyl-L-methionine = N(6)-dimethyladenosine(1518)/N(6)-dimethyladenosine(1519) in 16S rRNA + 4 S-adenosyl-L-homocysteine + 4 H(+). Its function is as follows. Specifically dimethylates two adjacent adenosines (A1518 and A1519) in the loop of a conserved hairpin near the 3'-end of 16S rRNA in the 30S particle. May play a critical role in biogenesis of 30S subunits. The chain is Ribosomal RNA small subunit methyltransferase A from Methylobacterium radiotolerans (strain ATCC 27329 / DSM 1819 / JCM 2831 / NBRC 15690 / NCIMB 10815 / 0-1).